We begin with the raw amino-acid sequence, 655 residues long: Probable inactive receptor kinase At1g48480 (655 aa).

The signal sequence occupies residues 1–32; that stretch reads MRVFFFPNSSMAILSVFLSLLLLSLPLPSTQD. 6 LRR repeats span residues 71–95, 98–120, 122–144, 146–169, 170–192, and 194–215; these read SNRVTALRLPGVALSGDIPEGIFGN, QLRTLSLRLNALSGSLPKDLSTS, NLRHLYLQGNRFSGEIPEVLFSL, HLVRLNLASNSFTGEISSGFTNLT, KLKTLFLENNQLSGSIPDLDLPL, and QFNVSNNSLNGSIPKNLQRFES. The disordered stretch occupies residues 234-260; sequence EETVPSQPTSGGNRTPPSVEGSEEKKK. Residues 237-249 show a composition bias toward polar residues; it reads VPSQPTSGGNRTP. Residues 269 to 289 traverse the membrane as a helical segment; it reads IAGIVIGCVVGFALIVLILMV. The Protein kinase domain occupies 371-646; it reads RASAEVLGKG…RKMENLRPYS (276 aa). Position 373 is a phosphoserine (Ser373). 377–385 is an ATP binding site; sequence LGKGTFGTA. The residue at position 394 (Thr394) is a Phosphothreonine. Position 399 (Lys399) interacts with ATP. Residue Ser450 is modified to Phosphoserine. Phosphothreonine is present on Thr526. Phosphoserine is present on Ser546. Thr622 is subject to Phosphothreonine.

Belongs to the protein kinase superfamily. In terms of tissue distribution, highly expressed in seedlings and leaves. Lower expression in roots, stems, flowers and siliques. Detected in the vascular tissues of roots, in the trichomes of young rosettes leaves and hydathodes, in the floral abscission zones, in filament apex and stomata cells of anthers, in inflorescence stems and in sepals.

The protein resides in the cell membrane. The protein is Probable inactive receptor kinase At1g48480 (RKL1) of Arabidopsis thaliana (Mouse-ear cress).